The sequence spans 534 residues: Nuclear polyadenylated RNA-binding protein 4 (534 aa).

The interval 1-154 (MSSDEEDFND…TKEERSKADL (154 aa)) is disordered. Ser-2 and Ser-3 each carry phosphoserine. Positions 13–30 (GDDKPTTTEEVKKEEEQN) are enriched in basic and acidic residues. The segment covering 37 to 78 (SQLDQLAALQALSSSLNKLNNPNSNNSSSNNSNQDTSSSKQD) has biased composition (low complexity). Ser-51 and Ser-87 each carry phosphoserine. Residues 81 to 98 (ANDKEGSNEDTKNEKKQE) show a composition bias toward basic and acidic residues. Low complexity-rich tracts occupy residues 99 to 112 (SATS…ASSA) and 121 to 144 (QLQQ…QVTQ). Over residues 145–154 (TKEERSKADL) the composition is skewed to basic and acidic residues. RRM domains lie at 159 to 241 (CKMF…EQDK) and 243 to 320 (GKIF…RAEP). Position 206 is a phosphoserine (Ser-206). 2 disordered regions span residues 316–354 (KRAE…DFNQ) and 415–534 (MPPN…PYNR). Low complexity predominate over residues 336 to 354 (GNNMNRRGGNFGNQGDFNQ). Residues 420-459 (MTLNQPQQDSNATQGSPAPSDSDNNKSNDVQTIGNTSNTD) show a composition bias toward polar residues. Thr-458 is modified (phosphothreonine). 2 positions are modified to phosphoserine: Ser-460 and Ser-462. The span at 460 to 475 (SGSPPLNLPNGPKGPS) shows a compositional bias: low complexity. A compositionally biased stretch (basic and acidic residues) spans 478-505 (NDDHNSGYGYNRDRGDRDRNDRDRDYNH). Position 519 is an omega-N-methylarginine (Arg-519). Low complexity predominate over residues 523 to 534 (NRRNNGYHPYNR).

As to quaternary structure, interacts with NAM7. In terms of processing, methylated by HMT1. The methylation is required for nuclear export.

The protein localises to the cytoplasm. The protein resides in the nucleus. It is found in the stress granule. Its function is as follows. RNA-binding protein, which is involved in the polyadenylation-dependent pre-mRNA 3'-end formation and cooperates with the cleavage factor CFIA complex and the cleavage and polyadenylation factor (CPF) complex. May be involved in regulation of poly(A) site selection. Is involved in nonsense-mediated mRNA decay. Seems to bind to an RNA downstream sequence element (DSE) located 3' of a nonsense codon and may mark the transcript for decay. This Saccharomyces cerevisiae (strain ATCC 204508 / S288c) (Baker's yeast) protein is Nuclear polyadenylated RNA-binding protein 4.